Here is a 224-residue protein sequence, read N- to C-terminus: Urease accessory protein UreF (224 aa).

This sequence belongs to the UreF family. As to quaternary structure, ureD, UreF and UreG form a complex that acts as a GTP-hydrolysis-dependent molecular chaperone, activating the urease apoprotein by helping to assemble the nickel containing metallocenter of UreC. The UreE protein probably delivers the nickel.

Its subcellular location is the cytoplasm. Functionally, required for maturation of urease via the functional incorporation of the urease nickel metallocenter. The protein is Urease accessory protein UreF of Escherichia coli O157:H7.